A 796-amino-acid polypeptide reads, in one-letter code: Putative aconitate hydratase, mitochondrial (796 aa).

The transit peptide at Met1 to Leu28 directs the protein to the mitochondrion. Substrate is bound by residues Gln108 and Asp201 to His203. Positions 399, 462, and 465 each coordinate [4Fe-4S] cluster. Substrate is bound by residues Arg489 and Arg494. Residues Glu540–Ser569 form a disordered region. Residue Ala685–Arg686 coordinates substrate.

Belongs to the aconitase/IPM isomerase family.

The protein localises to the mitochondrion. Functionally, has no detectable activity towards cis-acontiate or cis-homoaconitate. The protein is Putative aconitate hydratase, mitochondrial (acoB) of Emericella nidulans (strain FGSC A4 / ATCC 38163 / CBS 112.46 / NRRL 194 / M139) (Aspergillus nidulans).